We begin with the raw amino-acid sequence, 99 residues long: MKTQVLFLVFALAAVMVSGDATPHVYCGRRLATMLSFVCDNQYQVKRTPYISPENEGYGWRWLEPQRARQLDGARGKRQGIAEECCNKPCTENELLGYC.

The signal sequence occupies residues 1–19 (MKTQVLFLVFALAAVMVSG). Cystine bridges form between C27–C86, C39–C99, and C85–C90. The propeptide at 48–76 (TPYISPENEGYGWRWLEPQRARQLDGARG) is c peptide like.

Belongs to the insulin family. Heterodimer of a B chain and an A chain linked by two disulfide bonds.

It localises to the secreted. Its function is as follows. Brain peptide responsible for activation of prothoracic glands to produce ecdysone in insects. The protein is Bombyxin A-1 homolog (SBXA1) of Samia cynthia (Ailanthus silkmoth).